The following is a 179-amino-acid chain: Acireductone dioxygenase (179 aa).

The span at 1–12 shows a compositional bias: acidic residues; the sequence is MVEAWYMDDSEE. Residues 1–21 form a disordered region; that stretch reads MVEAWYMDDSEEDQRRPHRLE. Fe(2+)-binding residues include histidine 88, histidine 90, glutamate 94, and histidine 133. Residues histidine 88, histidine 90, glutamate 94, and histidine 133 each contribute to the Ni(2+) site.

It belongs to the acireductone dioxygenase (ARD) family. In terms of assembly, monomer. Interacts with MMP14. Fe(2+) is required as a cofactor. Ni(2+) serves as cofactor.

It localises to the cytoplasm. Its subcellular location is the nucleus. The protein localises to the cell membrane. It carries out the reaction 1,2-dihydroxy-5-(methylsulfanyl)pent-1-en-3-one + O2 = 4-methylsulfanyl-2-oxobutanoate + formate + 2 H(+). The enzyme catalyses 1,2-dihydroxy-5-(methylsulfanyl)pent-1-en-3-one + O2 = 3-(methylsulfanyl)propanoate + CO + formate + 2 H(+). The protein operates within amino-acid biosynthesis; L-methionine biosynthesis via salvage pathway; L-methionine from S-methyl-5-thio-alpha-D-ribose 1-phosphate: step 5/6. Catalyzes 2 different reactions between oxygen and the acireductone 1,2-dihydroxy-3-keto-5-methylthiopentene (DHK-MTPene) depending upon the metal bound in the active site. Fe-containing acireductone dioxygenase (Fe-ARD) produces formate and 2-keto-4-methylthiobutyrate (KMTB), the alpha-ketoacid precursor of methionine in the methionine recycle pathway. Ni-containing acireductone dioxygenase (Ni-ARD) produces methylthiopropionate, carbon monoxide and formate, and does not lie on the methionine recycle pathway. Also down-regulates cell migration mediated by MMP14. In Monodelphis domestica (Gray short-tailed opossum), this protein is Acireductone dioxygenase.